Reading from the N-terminus, the 156-residue chain is MNFNATLFGQTVAFILFVWFCMKFVWPPLMNAIEERQKKIADGLADAGRAAKDLELAQIKATEQLKEAKVTANEIIEQANKRKAQIVEEAKVEAQTERAKIIAQGQAEIENERNRVKDDLRKQVALLAIAGAEKILERTIDPEAHSDIVNKLVAEI.

A helical transmembrane segment spans residues 7-29 (LFGQTVAFILFVWFCMKFVWPPL).

The protein belongs to the ATPase B chain family. F-type ATPases have 2 components, F(1) - the catalytic core - and F(0) - the membrane proton channel. F(1) has five subunits: alpha(3), beta(3), gamma(1), delta(1), epsilon(1). F(0) has three main subunits: a(1), b(2) and c(10-14). The alpha and beta chains form an alternating ring which encloses part of the gamma chain. F(1) is attached to F(0) by a central stalk formed by the gamma and epsilon chains, while a peripheral stalk is formed by the delta and b chains.

The protein localises to the cell inner membrane. Functionally, f(1)F(0) ATP synthase produces ATP from ADP in the presence of a proton or sodium gradient. F-type ATPases consist of two structural domains, F(1) containing the extramembraneous catalytic core and F(0) containing the membrane proton channel, linked together by a central stalk and a peripheral stalk. During catalysis, ATP synthesis in the catalytic domain of F(1) is coupled via a rotary mechanism of the central stalk subunits to proton translocation. Component of the F(0) channel, it forms part of the peripheral stalk, linking F(1) to F(0). This is ATP synthase subunit b from Shewanella frigidimarina (strain NCIMB 400).